Reading from the N-terminus, the 75-residue chain is U6-lycotoxin-Ls1e (75 aa).

The N-terminal stretch at M1–A21 is a signal peptide. Positions E22–R25 are excised as a propeptide.

The protein belongs to the neurotoxin 19 (CSTX) family. 06 (U6-Lctx) subfamily. Post-translationally, contains 4 disulfide bonds. Expressed by the venom gland.

The protein resides in the secreted. The polypeptide is U6-lycotoxin-Ls1e (Lycosa singoriensis (Wolf spider)).